The following is a 239-amino-acid chain: Glucosamine-6-phosphate deaminase (239 aa).

Asp-62 (proton acceptor; for enolization step) is an active-site residue. The For ring-opening step role is filled by Asn-128. His-130 serves as the catalytic Proton acceptor; for ring-opening step. Glu-135 (for ring-opening step) is an active-site residue.

Belongs to the glucosamine/galactosamine-6-phosphate isomerase family. NagB subfamily.

It catalyses the reaction alpha-D-glucosamine 6-phosphate + H2O = beta-D-fructose 6-phosphate + NH4(+). Its pathway is amino-sugar metabolism; N-acetylneuraminate degradation; D-fructose 6-phosphate from N-acetylneuraminate: step 5/5. Its function is as follows. Catalyzes the reversible isomerization-deamination of glucosamine 6-phosphate (GlcN6P) to form fructose 6-phosphate (Fru6P) and ammonium ion. The polypeptide is Glucosamine-6-phosphate deaminase (Lactobacillus acidophilus (strain ATCC 700396 / NCK56 / N2 / NCFM)).